Reading from the N-terminus, the 374-residue chain is MSVALFCGPPPAVSFGCKDGRGRKGMVRSKDIVRQTVKPPAHACRLIGWNKYPGSVVPTNSSLSPSPTALDDEIELDPSPFLIIYKDGRIERLKGTTVIPACPEVATKDVIIDPATGVSVRLYLPNVVDLPSKKLPVLVYFHGGGFVIENTGSPNYHNYLTLLAAKSGLLIVSVNYRLAPEHPIPASFDDCMAGFNWVVSHSAGPAPEPWLARHGDLTQILISGDSAGGTVTHYVLLRADAGVIEGAALVHPYFLGSKRLENQTEEDFEFHEKLWRLSTPDTEGLDDPLINPLAPGAPSLAGLKCKRAVVFVAELDFLVERGRMYYDALVKSGWGGEAELVHQKGVGHVFHLSDYSGDVSVDMMAKMVAFLRGE.

The N-terminal 68 residues, 1–68 (MSVALFCGPP…TNSSLSPSPT (68 aa)), are a transit peptide targeting the amyloplast. The active-site Acyl-ester intermediate is the Ser226. Residues Asp316 and His348 each act as charge relay system in the active site.

The protein belongs to the AB hydrolase superfamily. Homodimer.

It is found in the plastid. The protein resides in the amyloplast. The catalysed reaction is 6-tuliposide A = tulipalin A + D-glucose. Functionally, lactone-forming carboxylesterases, specifically catalyzing intramolecular transesterification, but not hydrolysis. Involved in the biosynthesis of tulipalins, defensive chemicals that show antimicrobial activities against a broad range of strains of bacteria and fungi. Substrates are 6-tuliposide A &gt; 6-tuliposide B. The chain is Probable tuliposide A-converting enzyme b6, amyloplastic (TCEA-B6) from Tulipa gesneriana (Garden tulip).